A 1264-amino-acid chain; its full sequence is uncharacterized protein (1264 aa).

The first 18 residues, 1–18 (MMRKYLILLILLPALAVG), serve as a signal peptide directing secretion. The helical transmembrane segment at 1215 to 1235 (SYTVLGVVVITILTMSIILCL) threads the bilayer.

It localises to the host membrane. This is an uncharacterized protein from Ostreid herpesvirus 1 (isolate France) (OsHV-1).